The sequence spans 591 residues: Phenylalanine--tRNA ligase beta subunit (591 aa).

Residues 304–380 (LSYREMTVTT…VAFGYNNLIT (77 aa)) form the B5 domain. Residues Asp358, Asp364, Glu367, and Asp368 each coordinate Mg(2+).

This sequence belongs to the phenylalanyl-tRNA synthetase beta subunit family. Type 2 subfamily. Tetramer of two alpha and two beta subunits. Mg(2+) is required as a cofactor.

It localises to the cytoplasm. The catalysed reaction is tRNA(Phe) + L-phenylalanine + ATP = L-phenylalanyl-tRNA(Phe) + AMP + diphosphate + H(+). The sequence is that of Phenylalanine--tRNA ligase beta subunit from Caenorhabditis elegans.